We begin with the raw amino-acid sequence, 255 residues long: 4-hydroxy-tetrahydrodipicolinate reductase (255 aa).

NAD(+) contacts are provided by residues 9 to 14 (GFKGKM), Asp-35, 89 to 91 (GTT), and 115 to 118 (APNF). His-145 (proton donor/acceptor) is an active-site residue. (S)-2,3,4,5-tetrahydrodipicolinate is bound at residue His-146. The active-site Proton donor is the Lys-149. 155 to 156 (GT) lines the (S)-2,3,4,5-tetrahydrodipicolinate pocket.

The protein belongs to the DapB family.

It localises to the cytoplasm. The catalysed reaction is (S)-2,3,4,5-tetrahydrodipicolinate + NAD(+) + H2O = (2S,4S)-4-hydroxy-2,3,4,5-tetrahydrodipicolinate + NADH + H(+). It carries out the reaction (S)-2,3,4,5-tetrahydrodipicolinate + NADP(+) + H2O = (2S,4S)-4-hydroxy-2,3,4,5-tetrahydrodipicolinate + NADPH + H(+). It functions in the pathway amino-acid biosynthesis; L-lysine biosynthesis via DAP pathway; (S)-tetrahydrodipicolinate from L-aspartate: step 4/4. In terms of biological role, catalyzes the conversion of 4-hydroxy-tetrahydrodipicolinate (HTPA) to tetrahydrodipicolinate. In Streptococcus pneumoniae (strain 70585), this protein is 4-hydroxy-tetrahydrodipicolinate reductase.